The primary structure comprises 278 residues: UPF0276 protein Shew_2240 (278 aa).

The protein belongs to the UPF0276 family.

This Shewanella loihica (strain ATCC BAA-1088 / PV-4) protein is UPF0276 protein Shew_2240.